We begin with the raw amino-acid sequence, 414 residues long: Serine hydroxymethyltransferase (414 aa).

(6S)-5,6,7,8-tetrahydrofolate contacts are provided by residues Leu-116 and 120–122 (GHL). Lys-224 is modified (N6-(pyridoxal phosphate)lysine). Residues Glu-240 and 348 to 350 (SPF) contribute to the (6S)-5,6,7,8-tetrahydrofolate site.

It belongs to the SHMT family. As to quaternary structure, homodimer. It depends on pyridoxal 5'-phosphate as a cofactor.

The protein resides in the cytoplasm. The catalysed reaction is (6R)-5,10-methylene-5,6,7,8-tetrahydrofolate + glycine + H2O = (6S)-5,6,7,8-tetrahydrofolate + L-serine. Its pathway is one-carbon metabolism; tetrahydrofolate interconversion. The protein operates within amino-acid biosynthesis; glycine biosynthesis; glycine from L-serine: step 1/1. Its function is as follows. Catalyzes the reversible interconversion of serine and glycine with tetrahydrofolate (THF) serving as the one-carbon carrier. This reaction serves as the major source of one-carbon groups required for the biosynthesis of purines, thymidylate, methionine, and other important biomolecules. Also exhibits THF-independent aldolase activity toward beta-hydroxyamino acids, producing glycine and aldehydes, via a retro-aldol mechanism. The chain is Serine hydroxymethyltransferase from Campylobacter jejuni subsp. jejuni serotype O:23/36 (strain 81-176).